The chain runs to 451 residues: UPF0210 protein CLL_A1718 (451 aa).

The protein belongs to the UPF0210 family. In terms of assembly, homodimer.

The protein is UPF0210 protein CLL_A1718 of Clostridium botulinum (strain Eklund 17B / Type B).